The sequence spans 147 residues: 3-dehydroquinate dehydratase (147 aa).

The active-site Proton acceptor is the Y23. 3 residues coordinate substrate: N74, H80, and D87. Residue H100 is the Proton donor of the active site. Substrate-binding positions include 101-102 (LS) and R111.

It belongs to the type-II 3-dehydroquinase family. In terms of assembly, homododecamer.

The enzyme catalyses 3-dehydroquinate = 3-dehydroshikimate + H2O. It participates in metabolic intermediate biosynthesis; chorismate biosynthesis; chorismate from D-erythrose 4-phosphate and phosphoenolpyruvate: step 3/7. Functionally, catalyzes a trans-dehydration via an enolate intermediate. The chain is 3-dehydroquinate dehydratase from Glaesserella parasuis serovar 5 (strain SH0165) (Haemophilus parasuis).